Reading from the N-terminus, the 63-residue chain is Large ribosomal subunit protein eL29 (63 aa).

Positions 1-26 (MAKSKNHTAHNQTRKAHRNGIKKPKT) are enriched in basic residues. The disordered stretch occupies residues 1–35 (MAKSKNHTAHNQTRKAHRNGIKKPKTYKYPSLKGV).

It belongs to the eukaryotic ribosomal protein eL29 family. In terms of assembly, component of the large ribosomal subunit. Mature ribosomes consist of a small (40S) and a large (60S) subunit. The 40S subunit contains about 32 different proteins and 1 molecule of RNA (18S). The 60S subunit contains 45 different proteins and 3 molecules of RNA (25S, 5.8S and 5S).

The protein resides in the cytoplasm. Its function is as follows. Component of the ribosome, a large ribonucleoprotein complex responsible for the synthesis of proteins in the cell. The small ribosomal subunit (SSU) binds messenger RNAs (mRNAs) and translates the encoded message by selecting cognate aminoacyl-transfer RNA (tRNA) molecules. The large subunit (LSU) contains the ribosomal catalytic site termed the peptidyl transferase center (PTC), which catalyzes the formation of peptide bonds, thereby polymerizing the amino acids delivered by tRNAs into a polypeptide chain. The nascent polypeptides leave the ribosome through a tunnel in the LSU and interact with protein factors that function in enzymatic processing, targeting, and the membrane insertion of nascent chains at the exit of the ribosomal tunnel. The polypeptide is Large ribosomal subunit protein eL29 (Candida albicans (strain SC5314 / ATCC MYA-2876) (Yeast)).